A 209-amino-acid chain; its full sequence is NAD-reducing hydrogenase HoxS subunit delta (209 aa).

As to quaternary structure, tetramer of an alpha and a gamma subunits (flavin-containing dimer), and a delta and a nickel-containing beta subunits (hydrogenase dimer). [4Fe-4S] cluster serves as cofactor. It depends on [3Fe-4S] cluster as a cofactor. The cofactor is [2Fe-2S] cluster. Requires FMN as cofactor. Ni(2+) is required as a cofactor.

Its subcellular location is the cytoplasm. It catalyses the reaction H2 + NAD(+) = NADH + H(+). The polypeptide is NAD-reducing hydrogenase HoxS subunit delta (hoxY) (Cupriavidus necator (strain ATCC 17699 / DSM 428 / KCTC 22496 / NCIMB 10442 / H16 / Stanier 337) (Ralstonia eutropha)).